The following is a 123-amino-acid chain: Small ribosomal subunit protein uS11 (123 aa).

It belongs to the universal ribosomal protein uS11 family. As to quaternary structure, part of the 30S ribosomal subunit. Interacts with proteins S7 and S18. Binds to IF-3.

Located on the platform of the 30S subunit, it bridges several disparate RNA helices of the 16S rRNA. Forms part of the Shine-Dalgarno cleft in the 70S ribosome. This Coxiella burnetii (strain CbuK_Q154) (Coxiella burnetii (strain Q154)) protein is Small ribosomal subunit protein uS11.